The following is a 188-amino-acid chain: Elongation factor P (188 aa).

Position 34 is an N6-(3,6-diaminohexanoyl)-5-hydroxylysine (Lys-34).

Belongs to the elongation factor P family. May be beta-lysylated on the epsilon-amino group of Lys-34 by the combined action of EpmA and EpmB, and then hydroxylated on the C5 position of the same residue by EpmC (if this protein is present). Lysylation is critical for the stimulatory effect of EF-P on peptide-bond formation. The lysylation moiety may extend toward the peptidyltransferase center and stabilize the terminal 3-CCA end of the tRNA. Hydroxylation of the C5 position on Lys-34 may allow additional potential stabilizing hydrogen-bond interactions with the P-tRNA.

The protein localises to the cytoplasm. It functions in the pathway protein biosynthesis; polypeptide chain elongation. Functionally, involved in peptide bond synthesis. Alleviates ribosome stalling that occurs when 3 or more consecutive Pro residues or the sequence PPG is present in a protein, possibly by augmenting the peptidyl transferase activity of the ribosome. Modification of Lys-34 is required for alleviation. In Sodalis glossinidius (strain morsitans), this protein is Elongation factor P.